Reading from the N-terminus, the 284-residue chain is Tropomyosin Per a 7.0101 (284 aa).

Residues 22–266 are a coiled coil; sequence ALLCEQQARD…EDELVHEKEK (245 aa).

This sequence belongs to the tropomyosin family. In terms of assembly, homodimer.

In terms of biological role, tropomyosin, in association with the troponin complex, plays a central role in the calcium dependent regulation of muscle contraction. The chain is Tropomyosin Per a 7.0101 from Periplaneta americana (American cockroach).